The following is a 238-amino-acid chain: uncharacterized protein (238 aa).

The segment at 219–238 (EESINNNVDDTDDIDNDNFI) is disordered. A compositionally biased stretch (acidic residues) spans 227–238 (DDTDDIDNDNFI).

This is an uncharacterized protein from Buchnera aphidicola subsp. Acyrthosiphon pisum (strain APS) (Acyrthosiphon pisum symbiotic bacterium).